The following is a 342-amino-acid chain: MTSLTLALDAMGGDHGPHVTVPAALRALKSHSSLKIILVGDKTEIDVYLRQAEQPLLSRIEVIHTDEVVSMSDRPVHALRTRKNSSMRLSIELVRDGRAAACVSAGNTGALMAMAKVLLKTLPGVDRPALVSCLPSVTQKPVYLLDLGANISCDSETLFQFAVMGSVLCEAVDKKSRPKVALLNVGTEEIKGNDQVQQAAQILQNTDQINYTGFIEGDEIYLGNVDVIVCDGFVGNITLKTSEGIAKLLVHQLKRGLTQGFFVRFLAKLIAPRIQAVLSQMNPDHYNGASLIGLRGIVVKSHGNADETAYLQAISLAVTEAQRRLPEMIKDRLESILLDINN.

Belongs to the PlsX family. In terms of assembly, homodimer. Probably interacts with PlsY.

The protein localises to the cytoplasm. It catalyses the reaction a fatty acyl-[ACP] + phosphate = an acyl phosphate + holo-[ACP]. Its pathway is lipid metabolism; phospholipid metabolism. In terms of biological role, catalyzes the reversible formation of acyl-phosphate (acyl-PO(4)) from acyl-[acyl-carrier-protein] (acyl-ACP). This enzyme utilizes acyl-ACP as fatty acyl donor, but not acyl-CoA. This Shewanella sp. (strain ANA-3) protein is Phosphate acyltransferase.